A 231-amino-acid chain; its full sequence is Large ribosomal subunit protein uL1 (231 aa).

The protein belongs to the universal ribosomal protein uL1 family. Part of the 50S ribosomal subunit.

Functionally, binds directly to 23S rRNA. The L1 stalk is quite mobile in the ribosome, and is involved in E site tRNA release. In terms of biological role, protein L1 is also a translational repressor protein, it controls the translation of the L11 operon by binding to its mRNA. The chain is Large ribosomal subunit protein uL1 from Neisseria meningitidis serogroup C (strain 053442).